The following is a 306-amino-acid chain: Epoxyqueuosine reductase (306 aa).

Residue Asp131 is the Proton donor of the active site. The 33-residue stretch at 173–205 (LDLTYDHPVTDHCGTCTACIDACPTQAIVQPYV) folds into the 4Fe-4S ferredoxin-type domain. [4Fe-4S] cluster contacts are provided by Cys185, Cys188, Cys191, Cys195, Cys211, Cys238, Cys241, and Cys245.

It belongs to the QueG family. In terms of assembly, monomer. Requires cob(II)alamin as cofactor. [4Fe-4S] cluster serves as cofactor.

It localises to the cytoplasm. It carries out the reaction epoxyqueuosine(34) in tRNA + AH2 = queuosine(34) in tRNA + A + H2O. It functions in the pathway tRNA modification; tRNA-queuosine biosynthesis. In terms of biological role, catalyzes the conversion of epoxyqueuosine (oQ) to queuosine (Q), which is a hypermodified base found in the wobble positions of tRNA(Asp), tRNA(Asn), tRNA(His) and tRNA(Tyr). In Cellulophaga algicola (strain DSM 14237 / IC166 / ACAM 630), this protein is Epoxyqueuosine reductase.